The primary structure comprises 456 residues: Cysteine--tRNA ligase (456 aa).

Cys28 is a binding site for Zn(2+). The 'HIGH' region motif lies at 30-40 (ITVYDHCHLGH). Cys209, His234, and Glu238 together coordinate Zn(2+). A 'KMSKS' region motif is present at residues 266-270 (KMAKS). Lys269 is a binding site for ATP.

This sequence belongs to the class-I aminoacyl-tRNA synthetase family. Monomer. Zn(2+) is required as a cofactor.

The protein localises to the cytoplasm. It catalyses the reaction tRNA(Cys) + L-cysteine + ATP = L-cysteinyl-tRNA(Cys) + AMP + diphosphate. This is Cysteine--tRNA ligase from Legionella pneumophila subsp. pneumophila (strain Philadelphia 1 / ATCC 33152 / DSM 7513).